The chain runs to 292 residues: Phosphoribulokinase 2 (292 aa).

An ATP-binding site is contributed by 12–20 (GSSGAGTST).

This sequence belongs to the phosphoribulokinase family.

The enzyme catalyses D-ribulose 5-phosphate + ATP = D-ribulose 1,5-bisphosphate + ADP + H(+). The protein operates within carbohydrate biosynthesis; Calvin cycle. This chain is Phosphoribulokinase 2 (prkB), found in Cereibacter sphaeroides (Rhodobacter sphaeroides).